Here is a 241-residue protein sequence, read N- to C-terminus: Carboxy-S-adenosyl-L-methionine synthase (241 aa).

S-adenosyl-L-methionine-binding positions include tyrosine 38, 63 to 65 (GCS), 88 to 89 (DN), 116 to 117 (DI), asparagine 131, and arginine 198.

The protein belongs to the class I-like SAM-binding methyltransferase superfamily. Cx-SAM synthase family. In terms of assembly, homodimer.

It carries out the reaction prephenate + S-adenosyl-L-methionine = carboxy-S-adenosyl-L-methionine + 3-phenylpyruvate + H2O. Catalyzes the conversion of S-adenosyl-L-methionine (SAM) to carboxy-S-adenosyl-L-methionine (Cx-SAM). This Histophilus somni (strain 129Pt) (Haemophilus somnus) protein is Carboxy-S-adenosyl-L-methionine synthase.